The chain runs to 718 residues: Polyribonucleotide nucleotidyltransferase (718 aa).

Mg(2+)-binding residues include Asp-497 and Asp-503. In terms of domain architecture, KH spans 564 to 623; that stretch reads PRLLTLKIEPEHIGMVIGPGGKTIKGITEQTSCKIDIADDGTVTIASSEGERAERARQMI. One can recognise an S1 motif domain in the interval 633 to 701; it reads GEVYLGRVTR…SKGRLNLTRL (69 aa).

This sequence belongs to the polyribonucleotide nucleotidyltransferase family. Interacts with RNase E (rne). Requires Mg(2+) as cofactor.

Its subcellular location is the cytoplasm. The catalysed reaction is RNA(n+1) + phosphate = RNA(n) + a ribonucleoside 5'-diphosphate. Functionally, involved in mRNA degradation. Catalyzes the phosphorolysis of single-stranded polyribonucleotides processively in the 3'- to 5'-direction. In Synechocystis sp. (strain ATCC 27184 / PCC 6803 / Kazusa), this protein is Polyribonucleotide nucleotidyltransferase.